The sequence spans 596 residues: uncharacterized protein (596 aa).

The region spanning 44-203 (KYLASQPRDF…PFVTYALDAD (160 aa)) is the Helicase ATP-binding domain. In terms of domain architecture, Helicase C-terminal spans 285-432 (RLRQLRTHVP…PHRESTDNPL (148 aa)). Disordered stretches follow at residues 420–444 (LGKP…QTEQ) and 506–533 (EQLQ…SVHG). Residues 510-523 (KRTAAQQASSTPDR) are compositionally biased toward polar residues.

To M.tuberculosis Rv2917.

This is an uncharacterized protein from Mycobacterium leprae (strain TN).